The primary structure comprises 215 residues: Putative O-methyltransferase MAB_1361c (215 aa).

Residues V42, E64, 66 to 67, S72, D90, and V91 each bind S-adenosyl-L-methionine; that span reads GT. Substrate is bound at residue D138.

It belongs to the class I-like SAM-binding methyltransferase superfamily. Cation-dependent O-methyltransferase family.

This is Putative O-methyltransferase MAB_1361c from Mycobacteroides abscessus (strain ATCC 19977 / DSM 44196 / CCUG 20993 / CIP 104536 / JCM 13569 / NCTC 13031 / TMC 1543 / L948) (Mycobacterium abscessus).